We begin with the raw amino-acid sequence, 732 residues long: Elongation factor 2 (732 aa).

Residues 19–260 form the tr-type G domain; sequence ERIRNMGIAA…MVVKHLPNPL (242 aa). GTP-binding positions include 28-35, 94-98, and 148-151; these read AHIDHGKT, DTPGH, and NKVD. At histidine 597 the chain carries Diphthamide.

Belongs to the TRAFAC class translation factor GTPase superfamily. Classic translation factor GTPase family. EF-G/EF-2 subfamily.

It is found in the cytoplasm. Functionally, catalyzes the GTP-dependent ribosomal translocation step during translation elongation. During this step, the ribosome changes from the pre-translocational (PRE) to the post-translocational (POST) state as the newly formed A-site-bound peptidyl-tRNA and P-site-bound deacylated tRNA move to the P and E sites, respectively. Catalyzes the coordinated movement of the two tRNA molecules, the mRNA and conformational changes in the ribosome. In Thermococcus kodakarensis (strain ATCC BAA-918 / JCM 12380 / KOD1) (Pyrococcus kodakaraensis (strain KOD1)), this protein is Elongation factor 2.